The chain runs to 358 residues: Protein-glutamate methylesterase/protein-glutamine glutaminase 1 (358 aa).

In terms of domain architecture, Response regulatory spans 8 to 125; it reads RVLIVDDSAV…ARGLEGYAEE (118 aa). Asp-59 bears the 4-aspartylphosphate mark. In terms of domain architecture, CheB-type methylesterase spans 165–352; sequence FRTTDRLIAI…LDRVAERLLA (188 aa). Residues Ser-177, His-203, and Asp-299 contribute to the active site.

This sequence belongs to the CheB family. Phosphorylated by CheA. Phosphorylation of the N-terminal regulatory domain activates the methylesterase activity.

The protein localises to the cytoplasm. It catalyses the reaction [protein]-L-glutamate 5-O-methyl ester + H2O = L-glutamyl-[protein] + methanol + H(+). The catalysed reaction is L-glutaminyl-[protein] + H2O = L-glutamyl-[protein] + NH4(+). Involved in chemotaxis. Part of a chemotaxis signal transduction system that modulates chemotaxis in response to various stimuli. Catalyzes the demethylation of specific methylglutamate residues introduced into the chemoreceptors (methyl-accepting chemotaxis proteins or MCP) by CheR. Also mediates the irreversible deamidation of specific glutamine residues to glutamic acid. In Xanthomonas axonopodis pv. citri (strain 306), this protein is Protein-glutamate methylesterase/protein-glutamine glutaminase 1.